The chain runs to 363 residues: Phosphoserine aminotransferase (363 aa).

Arginine 42 contributes to the L-glutamate binding site. Pyridoxal 5'-phosphate is bound by residues 76-77, tryptophan 102, threonine 156, aspartate 175, and glutamine 198; that span reads GR. At lysine 199 the chain carries N6-(pyridoxal phosphate)lysine. Residue 240–241 participates in pyridoxal 5'-phosphate binding; sequence NT.

It belongs to the class-V pyridoxal-phosphate-dependent aminotransferase family. SerC subfamily. In terms of assembly, homodimer. It depends on pyridoxal 5'-phosphate as a cofactor.

It localises to the cytoplasm. The catalysed reaction is O-phospho-L-serine + 2-oxoglutarate = 3-phosphooxypyruvate + L-glutamate. It catalyses the reaction 4-(phosphooxy)-L-threonine + 2-oxoglutarate = (R)-3-hydroxy-2-oxo-4-phosphooxybutanoate + L-glutamate. It participates in amino-acid biosynthesis; L-serine biosynthesis; L-serine from 3-phospho-D-glycerate: step 2/3. Its pathway is cofactor biosynthesis; pyridoxine 5'-phosphate biosynthesis; pyridoxine 5'-phosphate from D-erythrose 4-phosphate: step 3/5. Its function is as follows. Catalyzes the reversible conversion of 3-phosphohydroxypyruvate to phosphoserine and of 3-hydroxy-2-oxo-4-phosphonooxybutanoate to phosphohydroxythreonine. The sequence is that of Phosphoserine aminotransferase from Shewanella baltica (strain OS185).